A 394-amino-acid polypeptide reads, in one-letter code: Ribulose bisphosphate carboxylase large chain (394 aa).

K5 is subject to N6,N6,N6-trimethyllysine. Residues N114 and T164 each coordinate substrate. Residue K166 is the Proton acceptor of the active site. Residue K168 participates in substrate binding. Mg(2+)-binding residues include K192, D194, and E195. K192 is modified (N6-carboxylysine). Residue H285 is the Proton acceptor of the active site. Positions 286, 318, and 370 each coordinate substrate.

Belongs to the RuBisCO large chain family. Type I subfamily. In terms of assembly, heterohexadecamer of 8 large chains and 8 small chains. Mg(2+) serves as cofactor.

It localises to the plastid. The protein resides in the chloroplast. The enzyme catalyses 2 (2R)-3-phosphoglycerate + 2 H(+) = D-ribulose 1,5-bisphosphate + CO2 + H2O. It carries out the reaction D-ribulose 1,5-bisphosphate + O2 = 2-phosphoglycolate + (2R)-3-phosphoglycerate + 2 H(+). Its function is as follows. RuBisCO catalyzes two reactions: the carboxylation of D-ribulose 1,5-bisphosphate, the primary event in carbon dioxide fixation, as well as the oxidative fragmentation of the pentose substrate in the photorespiration process. Both reactions occur simultaneously and in competition at the same active site. The chain is Ribulose bisphosphate carboxylase large chain (rbcL) from Euryale ferox (Gorgon plant).